The sequence spans 94 residues: Co-chaperonin GroES (94 aa).

The protein belongs to the GroES chaperonin family. In terms of assembly, heptamer of 7 subunits arranged in a ring. Interacts with the chaperonin GroEL.

The protein resides in the cytoplasm. Together with the chaperonin GroEL, plays an essential role in assisting protein folding. The GroEL-GroES system forms a nano-cage that allows encapsulation of the non-native substrate proteins and provides a physical environment optimized to promote and accelerate protein folding. GroES binds to the apical surface of the GroEL ring, thereby capping the opening of the GroEL channel. This is Co-chaperonin GroES from Clostridioides difficile (strain 630) (Peptoclostridium difficile).